A 399-amino-acid chain; its full sequence is S-adenosylmethionine synthase (399 aa).

Histidine 15 is a binding site for ATP. Aspartate 17 is a binding site for Mg(2+). Glutamate 43 is a K(+) binding site. Residues glutamate 56 and glutamine 99 each coordinate L-methionine. Residues 99–109 (QSPDIADGVDH) are flexible loop. Residues 175–177 (DAK), 242–243 (RF), aspartate 251, 257–258 (RK), alanine 274, and lysine 278 each bind ATP. L-methionine is bound at residue aspartate 251. Residue lysine 282 participates in L-methionine binding.

This sequence belongs to the AdoMet synthase family. In terms of assembly, homotetramer; dimer of dimers. Mg(2+) serves as cofactor. It depends on K(+) as a cofactor.

The protein localises to the cytoplasm. The catalysed reaction is L-methionine + ATP + H2O = S-adenosyl-L-methionine + phosphate + diphosphate. Its pathway is amino-acid biosynthesis; S-adenosyl-L-methionine biosynthesis; S-adenosyl-L-methionine from L-methionine: step 1/1. Its function is as follows. Catalyzes the formation of S-adenosylmethionine (AdoMet) from methionine and ATP. The overall synthetic reaction is composed of two sequential steps, AdoMet formation and the subsequent tripolyphosphate hydrolysis which occurs prior to release of AdoMet from the enzyme. The chain is S-adenosylmethionine synthase from Lactobacillus acidophilus (strain ATCC 700396 / NCK56 / N2 / NCFM).